The chain runs to 292 residues: Probable endonuclease 4 (292 aa).

The Zn(2+) site is built by His-69, His-109, Glu-145, Asp-179, His-182, His-216, Asp-229, His-231, and Glu-261.

It belongs to the AP endonuclease 2 family. Zn(2+) serves as cofactor.

The enzyme catalyses Endonucleolytic cleavage to 5'-phosphooligonucleotide end-products.. Its function is as follows. Endonuclease IV plays a role in DNA repair. It cleaves phosphodiester bonds at apurinic or apyrimidinic (AP) sites, generating a 3'-hydroxyl group and a 5'-terminal sugar phosphate. The chain is Probable endonuclease 4 from Desulfotalea psychrophila (strain LSv54 / DSM 12343).